A 499-amino-acid polypeptide reads, in one-letter code: MTTTLPAYDEVVPRYEPVIGLETHVELGTNTKMFCGCPTDFGGAPNTRVCPVCLGLPGSLPVANRAAVEATIRIGLALNCSIAQWCRFARKNYYYPDMPKNFQISQYDEPLCVDGYLDVEVNGEPVRIGIERVHLEEDTGKTLHVGGATGRIHGATESLVDYNRAGIPLVEIVTKPIPGTGAMAPEVARAYVTELRDVLRSLGVSDVRMEEGSLRCDVNTSLNPPGEQWGTRTETKNVNSLRSVERAVRSEMIRQASVLDAGGRIVQETRHFHEETGDTTSGRSKETATDYRYFPEPDLVPIAPDPTWVAELKAELPELPRLHRRRLQQEWGLSDLDMQSILNAGAVELIEATIAAGATPAAARKWWLGELSRRANETGAELADIGATPGQVAELQGLVDAGKLTDKLARTVLEHVVAGEGSPAEIMAARNLEVVSDTGALTAAVDEAIAANPAIADKVRGGKVAAAGALVGAVMKTTRGQADAKTVRELILERLGAQG.

It belongs to the GatB/GatE family. GatB subfamily. Heterotrimer of A, B and C subunits.

The catalysed reaction is L-glutamyl-tRNA(Gln) + L-glutamine + ATP + H2O = L-glutaminyl-tRNA(Gln) + L-glutamate + ADP + phosphate + H(+). It catalyses the reaction L-aspartyl-tRNA(Asn) + L-glutamine + ATP + H2O = L-asparaginyl-tRNA(Asn) + L-glutamate + ADP + phosphate + 2 H(+). In terms of biological role, allows the formation of correctly charged Asn-tRNA(Asn) or Gln-tRNA(Gln) through the transamidation of misacylated Asp-tRNA(Asn) or Glu-tRNA(Gln) in organisms which lack either or both of asparaginyl-tRNA or glutaminyl-tRNA synthetases. The reaction takes place in the presence of glutamine and ATP through an activated phospho-Asp-tRNA(Asn) or phospho-Glu-tRNA(Gln). The protein is Aspartyl/glutamyl-tRNA(Asn/Gln) amidotransferase subunit B of Salinispora arenicola (strain CNS-205).